Reading from the N-terminus, the 126-residue chain is Glycine cleavage system H protein (126 aa).

Residues 21-103 (TVTIGISEHA…YDGGWIVKVK (83 aa)) form the Lipoyl-binding domain. Lys62 is subject to N6-lipoyllysine.

The protein belongs to the GcvH family. The glycine cleavage system is composed of four proteins: P, T, L and H. Requires (R)-lipoate as cofactor.

In terms of biological role, the glycine cleavage system catalyzes the degradation of glycine. The H protein shuttles the methylamine group of glycine from the P protein to the T protein. This is Glycine cleavage system H protein from Vibrio cholerae serotype O1 (strain ATCC 39541 / Classical Ogawa 395 / O395).